The chain runs to 545 residues: Chaperonin GroEL 1 (545 aa).

ATP-binding positions include 30 to 33 (TLGP), K51, 87 to 91 (DGTTT), G415, and D495.

Belongs to the chaperonin (HSP60) family. As to quaternary structure, forms a cylinder of 14 subunits composed of two heptameric rings stacked back-to-back. Interacts with the co-chaperonin GroES.

Its subcellular location is the cytoplasm. It catalyses the reaction ATP + H2O + a folded polypeptide = ADP + phosphate + an unfolded polypeptide.. In terms of biological role, together with its co-chaperonin GroES, plays an essential role in assisting protein folding. The GroEL-GroES system forms a nano-cage that allows encapsulation of the non-native substrate proteins and provides a physical environment optimized to promote and accelerate protein folding. In Rhizobium etli (strain ATCC 51251 / DSM 11541 / JCM 21823 / NBRC 15573 / CFN 42), this protein is Chaperonin GroEL 1.